A 265-amino-acid polypeptide reads, in one-letter code: Glutamate racemase (265 aa).

Substrate contacts are provided by residues 12-13 (DS) and 44-45 (YG). The active-site Proton donor/acceptor is the cysteine 75. 76–77 (NT) provides a ligand contact to substrate. Cysteine 186 serves as the catalytic Proton donor/acceptor. 187 to 188 (TH) is a binding site for substrate.

This sequence belongs to the aspartate/glutamate racemases family.

The catalysed reaction is L-glutamate = D-glutamate. It functions in the pathway cell wall biogenesis; peptidoglycan biosynthesis. Provides the (R)-glutamate required for cell wall biosynthesis. The polypeptide is Glutamate racemase (Pseudomonas entomophila (strain L48)).